Reading from the N-terminus, the 194-residue chain is Imidazoleglycerol-phosphate dehydratase (194 aa).

It belongs to the imidazoleglycerol-phosphate dehydratase family.

The protein localises to the cytoplasm. The catalysed reaction is D-erythro-1-(imidazol-4-yl)glycerol 3-phosphate = 3-(imidazol-4-yl)-2-oxopropyl phosphate + H2O. It functions in the pathway amino-acid biosynthesis; L-histidine biosynthesis; L-histidine from 5-phospho-alpha-D-ribose 1-diphosphate: step 6/9. The polypeptide is Imidazoleglycerol-phosphate dehydratase (Ruminiclostridium cellulolyticum (strain ATCC 35319 / DSM 5812 / JCM 6584 / H10) (Clostridium cellulolyticum)).